Here is a 953-residue protein sequence, read N- to C-terminus: Leucine-rich repeat receptor protein kinase HPCA1 (953 aa).

The N-terminal stretch at 1 to 23 (MSSRTGASLLLILFFFQICSVSA) is a signal peptide. Over 24-558 (LTNGLDASAL…EVSSKSSNKS (535 aa)) the chain is Extracellular. LRR repeat units lie at residues 64–88 (NDRV…ISFL), 89–113 (SELR…IGNL), 115–137 (KLRN…IGTL), 138–162 (KELI…GLLS), 164–187 (LYWF…TSAP), and 192–216 (LLQT…LFSS). N-linked (GlcNAc...) asparagine glycosylation is present at Asn-182. N-linked (GlcNAc...) asparagine glycosylation is present at Asn-217. LRR repeat units lie at residues 218-241 (MSLI…LSLV), 242-265 (KTLT…LNNL), 266-290 (TNLN…SLTS), 292-311 (YTLD…SWIS), 313-337 (LPSL…FFSP), 339-361 (QLQT…TDVS), and 362-384 (SQLE…ANKV). N-linked (GlcNAc...) asparagine glycosylation is found at Asn-264, Asn-284, and Asn-298. N-linked (GlcNAc...) asparagine glycosylation is present at Asn-411. Intrachain disulfides connect Cys-421–Cys-424 and Cys-434–Cys-436. N-linked (GlcNAc...) asparagine glycans are attached at residues Asn-456, Asn-459, Asn-510, and Asn-523. The chain crosses the membrane as a helical span at residues 559–579 (ILIGAVVGVVVLLLLLTIAGI). Topologically, residues 580-953 (YALRQKKRAE…NFPASKLEPQ (374 aa)) are cytoplasmic. Ser-606 and Ser-607 each carry phosphoserine. In terms of domain architecture, Protein kinase spans 631 to 905 (FSEANDVGGG…EVVKEIENIM (275 aa)). Residues 637–645 (VGGGGYGKV) and Lys-659 contribute to the ATP site. The active-site Proton acceptor is the Asp-755. Phosphothreonine is present on residues Thr-786, Thr-789, and Thr-790. A compositionally biased stretch (polar residues) spans 912–921 (PNSDSATSSR). The disordered stretch occupies residues 912–953 (PNSDSATSSRTYEDAIKGSGDPYGSESFQYSGNFPASKLEPQ). Ser-942 carries the post-translational modification Phosphoserine.

This sequence belongs to the protein kinase superfamily. Ser/Thr protein kinase family. In terms of processing, autophosphorylated at Ser-606, Ser-607, Thr-786, Thr-789, Thr-790 and Ser-942 in response to extracellular hydrogen peroxide. As to expression, widely expressed.

The protein localises to the cell membrane. The catalysed reaction is L-seryl-[protein] + ATP = O-phospho-L-seryl-[protein] + ADP + H(+). It catalyses the reaction L-threonyl-[protein] + ATP = O-phospho-L-threonyl-[protein] + ADP + H(+). Activated by autophosphorylation on serine and threonine residues in response to extracellular hydrogen peroxide. In terms of biological role, leucine-rich repeat receptor protein kinase that acts as sensor of extracellular hydrogen peroxide. Required for intracellular calcium influx in response to extracellular hydrogen peroxide. Mediates hydrogen peroxide-induced activation of calcium channels in guard cells and is required for stomatal closure. This Arabidopsis thaliana (Mouse-ear cress) protein is Leucine-rich repeat receptor protein kinase HPCA1.